A 252-amino-acid polypeptide reads, in one-letter code: Eukaryotic translation initiation factor 3 subunit J (252 aa).

2 disordered regions span residues 24–107 (VPAG…TPEE) and 209–232 (KQSK…TMKD). The span at 36 to 56 (EDEEDDVKDNWDDEEEEEEVK) shows a compositional bias: acidic residues. Residues 57-107 (EAEVKQEPKVSEKKKIAEKIKEKEKQQKKKQEELKKRLEAPEEHKELTPEE) show a composition bias toward basic and acidic residues. A coiled-coil region spans residues 65–130 (KVSEKKKIAE…ESDLELAKET (66 aa)).

Belongs to the eIF-3 subunit J family. As to quaternary structure, component of the eukaryotic translation initiation factor 3 (eIF-3) complex, which is composed of 13 subunits: EIF3A, EIF3B, EIF3C, EIF3D, EIF3E, EIF3F, EIF3G, EIF3H, EIF3I, EIF3J, EIF3K, EIF3L and EIF3M.

The protein resides in the cytoplasm. Its function is as follows. Component of the eukaryotic translation initiation factor 3 (eIF-3) complex, which is involved in protein synthesis of a specialized repertoire of mRNAs and, together with other initiation factors, stimulates binding of mRNA and methionyl-tRNAi to the 40S ribosome. The eIF-3 complex specifically targets and initiates translation of a subset of mRNAs involved in cell proliferation. The polypeptide is Eukaryotic translation initiation factor 3 subunit J (Gallus gallus (Chicken)).